A 117-amino-acid chain; its full sequence is Immunoglobulin lambda variable 7-43 (117 aa).

The first 19 residues, 1-19 (MAWTPLFLFLLTCCPGSNS), serve as a signal peptide directing secretion. The tract at residues 20–44 (QTVVTQEPSLTVSPGGTVTLTCASS) is framework-1. One can recognise an Ig-like domain in the interval 20–117 (QTVVTQEPSL…YCLLYYGGAQ (98 aa)). C41 and C109 are joined by a disulfide. The interval 45 to 53 (TGAVTSGYY) is complementarity-determining-1. Positions 54-70 (PNWFQQKPGQAPRALIY) are framework-2. The complementarity-determining-2 stretch occupies residues 71 to 73 (STS). The interval 74–109 (NKHSWTPARFSGSLLGGKAALTLSGVQPEDEAEYYC) is framework-3. A complementarity-determining-3 region spans residues 110-117 (LLYYGGAQ).

In terms of assembly, immunoglobulins are composed of two identical heavy chains and two identical light chains; disulfide-linked.

Its subcellular location is the secreted. It is found in the cell membrane. V region of the variable domain of immunoglobulin light chains that participates in the antigen recognition. Immunoglobulins, also known as antibodies, are membrane-bound or secreted glycoproteins produced by B lymphocytes. In the recognition phase of humoral immunity, the membrane-bound immunoglobulins serve as receptors which, upon binding of a specific antigen, trigger the clonal expansion and differentiation of B lymphocytes into immunoglobulins-secreting plasma cells. Secreted immunoglobulins mediate the effector phase of humoral immunity, which results in the elimination of bound antigens. The antigen binding site is formed by the variable domain of one heavy chain, together with that of its associated light chain. Thus, each immunoglobulin has two antigen binding sites with remarkable affinity for a particular antigen. The variable domains are assembled by a process called V-(D)-J rearrangement and can then be subjected to somatic hypermutations which, after exposure to antigen and selection, allow affinity maturation for a particular antigen. The chain is Immunoglobulin lambda variable 7-43 from Homo sapiens (Human).